Consider the following 132-residue polypeptide: Ribosome-binding factor A (132 aa).

Belongs to the RbfA family. In terms of assembly, monomer. Binds 30S ribosomal subunits, but not 50S ribosomal subunits or 70S ribosomes.

The protein localises to the cytoplasm. Its function is as follows. One of several proteins that assist in the late maturation steps of the functional core of the 30S ribosomal subunit. Associates with free 30S ribosomal subunits (but not with 30S subunits that are part of 70S ribosomes or polysomes). Required for efficient processing of 16S rRNA. May interact with the 5'-terminal helix region of 16S rRNA. This is Ribosome-binding factor A from Burkholderia vietnamiensis (strain G4 / LMG 22486) (Burkholderia cepacia (strain R1808)).